The following is a 397-amino-acid chain: Major outer membrane porin, serovar H (397 aa).

The first 22 residues, Met1–Ala22, serve as a signal peptide directing secretion.

This sequence belongs to the chlamydial porin (CP) (TC 1.B.2) family. As to quaternary structure, part of a disulfide cross-linked outer membrane complex (COMC) composed of the major outer membrane porin (MOMP), the small cysteine-rich protein (OmcA) and the large cysteine-rich periplasmic protein (OmcB).

The protein localises to the cell outer membrane. In elementary bodies (EBs, the infectious stage, which is able to survive outside the host cell) provides the structural integrity of the outer envelope through disulfide cross-links with the small cysteine-rich protein and the large cysteine-rich periplasmic protein. It has been described in publications as the Sarkosyl-insoluble COMC (Chlamydia outer membrane complex), and serves as the functional equivalent of peptidoglycan. In terms of biological role, permits diffusion of specific solutes through the outer membrane. The sequence is that of Major outer membrane porin, serovar H (ompA) from Chlamydia trachomatis.